The sequence spans 82 residues: Small ribosomal subunit protein bS16 (82 aa).

This sequence belongs to the bacterial ribosomal protein bS16 family.

This Deinococcus deserti (strain DSM 17065 / CIP 109153 / LMG 22923 / VCD115) protein is Small ribosomal subunit protein bS16.